Consider the following 146-residue polypeptide: Large ribosomal subunit protein uL15 (146 aa).

The interval 1–54 is disordered; that stretch reads MTIKLHDLRPAPGSKTPRTRVGRGEGSKGKTAGRGTKGTKARKQVPTTFEGGQM.

The protein belongs to the universal ribosomal protein uL15 family. As to quaternary structure, part of the 50S ribosomal subunit.

Binds to the 23S rRNA. The polypeptide is Large ribosomal subunit protein uL15 (Mycobacterium marinum (strain ATCC BAA-535 / M)).